The primary structure comprises 247 residues: Protein AC124 (247 aa).

It localises to the host cytoplasm. The protein resides in the host nucleus. Accelerates mortality in insect larvae. This Lepidoptera (butterflies and moths) protein is Protein AC124.